The sequence spans 564 residues: Probable diguanylate cyclase DgcQ (564 aa).

A run of 2 helical transmembrane segments spans residues 20-40 and 360-380; these read LGPG…STLL and IALT…WYVI. Positions 428 to 563 constitute a GGDEF domain; that stretch reads HPFSVIQVDL…GRNRVFASDN (136 aa). Residue aspartate 436 coordinates Mg(2+). Residues asparagine 444, histidine 449, and aspartate 453 each coordinate substrate. Glutamate 479 serves as a coordination point for Mg(2+). The active-site Proton acceptor is the glutamate 479.

As to quaternary structure, homodimer. It depends on Mg(2+) as a cofactor.

The protein localises to the cell inner membrane. The enzyme catalyses 2 GTP = 3',3'-c-di-GMP + 2 diphosphate. The protein operates within glycan metabolism; bacterial cellulose biosynthesis. Its pathway is purine metabolism; 3',5'-cyclic di-GMP biosynthesis. Its function is as follows. Catalyzes the synthesis of cyclic-di-GMP (c-di-GMP) via the condensation of 2 GTP molecules. Cyclic-di-GMP is a second messenger which controls cell surface-associated traits in bacteria. Involved in the regulation of cellulose production. The sequence is that of Probable diguanylate cyclase DgcQ from Escherichia coli (strain K12).